A 308-amino-acid polypeptide reads, in one-letter code: 4-hydroxy-tetrahydrodipicolinate synthase (308 aa).

Pyruvate is bound at residue threonine 53. Tyrosine 141 functions as the Proton donor/acceptor in the catalytic mechanism. Lysine 169 (schiff-base intermediate with substrate) is an active-site residue. Valine 209 contacts pyruvate.

The protein belongs to the DapA family. In terms of assembly, homotetramer; dimer of dimers.

Its subcellular location is the cytoplasm. The enzyme catalyses L-aspartate 4-semialdehyde + pyruvate = (2S,4S)-4-hydroxy-2,3,4,5-tetrahydrodipicolinate + H2O + H(+). It functions in the pathway amino-acid biosynthesis; L-lysine biosynthesis via DAP pathway; (S)-tetrahydrodipicolinate from L-aspartate: step 3/4. In terms of biological role, catalyzes the condensation of (S)-aspartate-beta-semialdehyde [(S)-ASA] and pyruvate to 4-hydroxy-tetrahydrodipicolinate (HTPA). The protein is 4-hydroxy-tetrahydrodipicolinate synthase of Acidothermus cellulolyticus (strain ATCC 43068 / DSM 8971 / 11B).